The sequence spans 117 residues: Large ribosomal subunit protein uL22 (117 aa).

Belongs to the universal ribosomal protein uL22 family. In terms of assembly, part of the 50S ribosomal subunit.

In terms of biological role, this protein binds specifically to 23S rRNA; its binding is stimulated by other ribosomal proteins, e.g. L4, L17, and L20. It is important during the early stages of 50S assembly. It makes multiple contacts with different domains of the 23S rRNA in the assembled 50S subunit and ribosome. Its function is as follows. The globular domain of the protein is located near the polypeptide exit tunnel on the outside of the subunit, while an extended beta-hairpin is found that lines the wall of the exit tunnel in the center of the 70S ribosome. The sequence is that of Large ribosomal subunit protein uL22 from Lactobacillus delbrueckii subsp. bulgaricus (strain ATCC 11842 / DSM 20081 / BCRC 10696 / JCM 1002 / NBRC 13953 / NCIMB 11778 / NCTC 12712 / WDCM 00102 / Lb 14).